The chain runs to 267 residues: MPLLQLILVALIQGVTEFLPVSSSGHLILLPRLTGLEDQGQAIDVAVHVGTLAAVVLFFWRDVRAGLIGLPRALIGRLDTKGARLALGLIVATIPTVIFGTFLYFTGLSESLRSVAVIGWTMLVFGVVLYIADQRGPIDKSASDWGVRDAVIMGLWQMLALIPGTSRSGITITGARSLGYNREDGARIAMLMSIPTIIASGVLLGTEVALDADVDLMRDMGIAALLAMASALAALALMMRLLRSVSFTPYVIYRVALGMVLLFIAYG.

7 helical membrane-spanning segments follow: residues 1–21, 40–60, 85–105, 112–132, 188–208, 219–239, and 245–265; these read MPLL…FLPV, GQAI…LFFW, LALG…FLYF, LRSV…LYIA, IAML…GTEV, DMGI…ALMM, and VSFT…LFIA.

Belongs to the UppP family.

It localises to the cell inner membrane. It carries out the reaction di-trans,octa-cis-undecaprenyl diphosphate + H2O = di-trans,octa-cis-undecaprenyl phosphate + phosphate + H(+). Catalyzes the dephosphorylation of undecaprenyl diphosphate (UPP). Confers resistance to bacitracin. The protein is Undecaprenyl-diphosphatase of Ruegeria sp. (strain TM1040) (Silicibacter sp.).